Here is a 458-residue protein sequence, read N- to C-terminus: Phosphoglucosamine mutase (458 aa).

Catalysis depends on serine 106, which acts as the Phosphoserine intermediate. 4 residues coordinate Mg(2+): serine 106, aspartate 247, aspartate 249, and aspartate 251. Serine 106 bears the Phosphoserine mark.

Belongs to the phosphohexose mutase family. Mg(2+) serves as cofactor. Post-translationally, activated by phosphorylation.

The enzyme catalyses alpha-D-glucosamine 1-phosphate = D-glucosamine 6-phosphate. Its function is as follows. Catalyzes the conversion of glucosamine-6-phosphate to glucosamine-1-phosphate. The sequence is that of Phosphoglucosamine mutase from Chlamydia trachomatis serovar D (strain ATCC VR-885 / DSM 19411 / UW-3/Cx).